Reading from the N-terminus, the 310-residue chain is Olfactory receptor 8G3 (310 aa).

Residues 1 to 25 lie on the Extracellular side of the membrane; sequence MDPGNHSSVTESILAGLSEQPELQL. Asn-5 carries N-linked (GlcNAc...) asparagine glycosylation. The helical transmembrane segment at 26-46 threads the bilayer; it reads RLFLLFLGICVVTVVGNLGMI. Topologically, residues 47 to 54 are cytoplasmic; sequence TLIGLSSH. The chain crosses the membrane as a helical span at residues 55 to 75; the sequence is LHTPMYYFLSSLSFIDFCHST. The Extracellular segment spans residues 76 to 99; the sequence is VITPKMLVNFATEKNIISYPECMA. Cys-97 and Cys-189 form a disulfide bridge. A helical transmembrane segment spans residues 100-120; it reads QLYLFSIFAIAECHMLAAMAY. The Cytoplasmic segment spans residues 121 to 139; sequence DCYVAICSPLLYNVIMSYH. Residues 140-160 form a helical membrane-spanning segment; that stretch reads HCFWLTVGVYILGILGSTIHT. Residues 161 to 197 lie on the Extracellular side of the membrane; sequence SFMLRLFLCKTNVINHYFCDLFPLLGLSCSSTYINEL. The helical transmembrane segment at 198–217 threads the bilayer; that stretch reads LVLVLSAFNILMPALTILAS. Residues 218–237 lie on the Cytoplasmic side of the membrane; sequence YIFIIASILRIHSTEGRSKA. The helical transmembrane segment at 238 to 258 threads the bilayer; that stretch reads FSTCSSHILAVAVFFGSAAFM. The Extracellular portion of the chain corresponds to 259-271; that stretch reads YLQPSSVSSMDQR. The chain crosses the membrane as a helical span at residues 272–292; the sequence is KVSSVFYTTIVPMLNPLIYSL. The Cytoplasmic portion of the chain corresponds to 293 to 310; the sequence is RNKDVKLAVKKILHQTAC.

This sequence belongs to the G-protein coupled receptor 1 family.

It is found in the cell membrane. In terms of biological role, odorant receptor. In Homo sapiens (Human), this protein is Olfactory receptor 8G3.